Consider the following 174-residue polypeptide: MTLILGIDPGSRITGYGVVRQTARGCEYVASGCIRTGSGELHERLQIVFRGVSEIIAQHGPVTMGIERVFMARNADSALKLGQARGAAIVAAAEAGLEIAEYSATQVKQAVAGTGGANKEQVMMMVMHLLKLTQKPQIDASDALAIALCHAHTRSSLVPHGLTTARRRGGRLRL.

Residues aspartate 8, glutamate 67, and aspartate 139 contribute to the active site. Mg(2+)-binding residues include aspartate 8, glutamate 67, and aspartate 139.

It belongs to the RuvC family. As to quaternary structure, homodimer which binds Holliday junction (HJ) DNA. The HJ becomes 2-fold symmetrical on binding to RuvC with unstacked arms; it has a different conformation from HJ DNA in complex with RuvA. In the full resolvosome a probable DNA-RuvA(4)-RuvB(12)-RuvC(2) complex forms which resolves the HJ. The cofactor is Mg(2+).

The protein resides in the cytoplasm. The enzyme catalyses Endonucleolytic cleavage at a junction such as a reciprocal single-stranded crossover between two homologous DNA duplexes (Holliday junction).. Its function is as follows. The RuvA-RuvB-RuvC complex processes Holliday junction (HJ) DNA during genetic recombination and DNA repair. Endonuclease that resolves HJ intermediates. Cleaves cruciform DNA by making single-stranded nicks across the HJ at symmetrical positions within the homologous arms, yielding a 5'-phosphate and a 3'-hydroxyl group; requires a central core of homology in the junction. The consensus cleavage sequence is 5'-(A/T)TT(C/G)-3'. Cleavage occurs on the 3'-side of the TT dinucleotide at the point of strand exchange. HJ branch migration catalyzed by RuvA-RuvB allows RuvC to scan DNA until it finds its consensus sequence, where it cleaves and resolves the cruciform DNA. This Pseudomonas putida (strain ATCC 47054 / DSM 6125 / CFBP 8728 / NCIMB 11950 / KT2440) protein is Crossover junction endodeoxyribonuclease RuvC.